A 308-amino-acid polypeptide reads, in one-letter code: Cis-prenyltransferase 4, chloroplastic (308 aa).

A chloroplast-targeting transit peptide spans 1 to 45 (MAFSLQLQQIFVSYTRFCSQPKSITNPLISLKLPSIHPLAFAQNA). D84 is a catalytic residue.

This sequence belongs to the UPP synthase family. It depends on Mg(2+) as a cofactor. In terms of tissue distribution, widely expressed.

It localises to the plastid. Its subcellular location is the chloroplast. Its function is as follows. Uses neryl diphosphate and geranyl diphosphate to catalyze the cis-prenyl chain elongation and produce polyprenyl diphosphate with a chain of 55 carbons. The protein is Cis-prenyltransferase 4, chloroplastic of Solanum lycopersicum (Tomato).